The following is a 293-amino-acid chain: Ribonuclease H2 subunit B (293 aa).

Residues 251–278 (KRPQNSDITSSLLKKPNRKQATKKSKYF) are disordered. The span at 265-276 (KPNRKQATKKSK) shows a compositional bias: basic residues.

This sequence belongs to the RNase H2 subunit B family. Component of the RNase H2 complex.

The protein resides in the nucleus. Its subcellular location is the cytoplasm. In terms of biological role, non catalytic subunit of RNase H2, an endonuclease that specifically degrades the RNA of RNA:DNA hybrids. Participates in DNA replication, possibly by mediating the removal of lagging-strand Okazaki fragment RNA primers during DNA replication. Mediates the excision of single ribonucleotides from DNA:RNA duplexes. This is Ribonuclease H2 subunit B (rnh202) from Schizosaccharomyces pombe (strain 972 / ATCC 24843) (Fission yeast).